The sequence spans 348 residues: NADH-quinone oxidoreductase subunit H (348 aa).

8 consecutive transmembrane segments (helical) span residues 10–30 (LPLFIVVGKTLLLLTVLLVLI), 82–102 (GVFLLAPFVSATLALSAWAVV), 115–135 (VGLLYILAISSLEVYGVIMGG), 161–181 (IGFVLVTVILVSGSLDLTTIV), 199–219 (LLDWNWLILFPMFIIFFISAL), 251–271 (LFFLGEYVAIVLMCALTTILF), 287–307 (VPGVIWFVLKVCFVFFWFAMV), and 322–342 (LGWKVFLPISLAMVVITAAIL).

This sequence belongs to the complex I subunit 1 family. NDH-1 is composed of 14 different subunits. Subunits NuoA, H, J, K, L, M, N constitute the membrane sector of the complex.

Its subcellular location is the cell inner membrane. The catalysed reaction is a quinone + NADH + 5 H(+)(in) = a quinol + NAD(+) + 4 H(+)(out). Its function is as follows. NDH-1 shuttles electrons from NADH, via FMN and iron-sulfur (Fe-S) centers, to quinones in the respiratory chain. The immediate electron acceptor for the enzyme in this species is believed to be ubiquinone. Couples the redox reaction to proton translocation (for every two electrons transferred, four hydrogen ions are translocated across the cytoplasmic membrane), and thus conserves the redox energy in a proton gradient. This subunit may bind ubiquinone. The polypeptide is NADH-quinone oxidoreductase subunit H (Bartonella bacilliformis (strain ATCC 35685 / KC583 / Herrer 020/F12,63)).